We begin with the raw amino-acid sequence, 336 residues long: Dihydroorotate dehydrogenase (quinone) (336 aa).

FMN is bound by residues 62-66 (AGLDK) and threonine 86. Lysine 66 is a substrate binding site. 111 to 115 (NRMGF) contributes to the substrate binding site. FMN is bound by residues asparagine 139 and asparagine 172. Asparagine 172 is a binding site for substrate. The active-site Nucleophile is serine 175. Residue asparagine 177 participates in substrate binding. Positions 217 and 245 each coordinate FMN. Residue 246–247 (NT) participates in substrate binding. FMN contacts are provided by residues glycine 268, glycine 297, and 318 to 319 (YS).

It belongs to the dihydroorotate dehydrogenase family. Type 2 subfamily. As to quaternary structure, monomer. It depends on FMN as a cofactor.

The protein resides in the cell membrane. It carries out the reaction (S)-dihydroorotate + a quinone = orotate + a quinol. Its pathway is pyrimidine metabolism; UMP biosynthesis via de novo pathway; orotate from (S)-dihydroorotate (quinone route): step 1/1. Functionally, catalyzes the conversion of dihydroorotate to orotate with quinone as electron acceptor. This is Dihydroorotate dehydrogenase (quinone) from Shigella dysenteriae serotype 1 (strain Sd197).